We begin with the raw amino-acid sequence, 344 residues long: Holliday junction branch migration complex subunit RuvB (344 aa).

The interval 1 to 181 (MERIVTPAEM…FGVLCAMEYY (181 aa)) is large ATPase domain (RuvB-L). ATP is bound by residues Leu-20, Arg-21, Gly-62, Lys-65, Thr-66, Thr-67, 128–130 (EDY), Arg-171, Tyr-181, and Arg-218. Position 66 (Thr-66) interacts with Mg(2+). A small ATPAse domain (RuvB-S) region spans residues 182-252 (DETQLKEIVI…EARDALELLE (71 aa)). Positions 255–344 (NQGFDKVDNK…SNKGQTSFFK (90 aa)) are head domain (RuvB-H). DNA is bound by residues Arg-310 and Arg-315.

Belongs to the RuvB family. In terms of assembly, homohexamer. Forms an RuvA(8)-RuvB(12)-Holliday junction (HJ) complex. HJ DNA is sandwiched between 2 RuvA tetramers; dsDNA enters through RuvA and exits via RuvB. An RuvB hexamer assembles on each DNA strand where it exits the tetramer. Each RuvB hexamer is contacted by two RuvA subunits (via domain III) on 2 adjacent RuvB subunits; this complex drives branch migration. In the full resolvosome a probable DNA-RuvA(4)-RuvB(12)-RuvC(2) complex forms which resolves the HJ.

It is found in the cytoplasm. It carries out the reaction ATP + H2O = ADP + phosphate + H(+). Functionally, the RuvA-RuvB-RuvC complex processes Holliday junction (HJ) DNA during genetic recombination and DNA repair, while the RuvA-RuvB complex plays an important role in the rescue of blocked DNA replication forks via replication fork reversal (RFR). RuvA specifically binds to HJ cruciform DNA, conferring on it an open structure. The RuvB hexamer acts as an ATP-dependent pump, pulling dsDNA into and through the RuvAB complex. RuvB forms 2 homohexamers on either side of HJ DNA bound by 1 or 2 RuvA tetramers; 4 subunits per hexamer contact DNA at a time. Coordinated motions by a converter formed by DNA-disengaged RuvB subunits stimulates ATP hydrolysis and nucleotide exchange. Immobilization of the converter enables RuvB to convert the ATP-contained energy into a lever motion, pulling 2 nucleotides of DNA out of the RuvA tetramer per ATP hydrolyzed, thus driving DNA branch migration. The RuvB motors rotate together with the DNA substrate, which together with the progressing nucleotide cycle form the mechanistic basis for DNA recombination by continuous HJ branch migration. Branch migration allows RuvC to scan DNA until it finds its consensus sequence, where it cleaves and resolves cruciform DNA. This chain is Holliday junction branch migration complex subunit RuvB, found in Clostridium botulinum (strain Eklund 17B / Type B).